Here is a 315-residue protein sequence, read N- to C-terminus: Aspartate carbamoyltransferase catalytic subunit (315 aa).

Positions 54 and 55 each coordinate carbamoyl phosphate. Residue Lys82 participates in L-aspartate binding. The carbamoyl phosphate site is built by Arg104, His134, and Gln137. L-aspartate is bound by residues Arg174 and Arg229. Residues Gly270 and Pro271 each coordinate carbamoyl phosphate.

The protein belongs to the aspartate/ornithine carbamoyltransferase superfamily. ATCase family. In terms of assembly, heterododecamer (2C3:3R2) of six catalytic PyrB chains organized as two trimers (C3), and six regulatory PyrI chains organized as three dimers (R2).

The enzyme catalyses carbamoyl phosphate + L-aspartate = N-carbamoyl-L-aspartate + phosphate + H(+). The protein operates within pyrimidine metabolism; UMP biosynthesis via de novo pathway; (S)-dihydroorotate from bicarbonate: step 2/3. In terms of biological role, catalyzes the condensation of carbamoyl phosphate and aspartate to form carbamoyl aspartate and inorganic phosphate, the committed step in the de novo pyrimidine nucleotide biosynthesis pathway. The chain is Aspartate carbamoyltransferase catalytic subunit from Leifsonia xyli subsp. xyli (strain CTCB07).